The following is a 259-amino-acid chain: MAVISMKQLLEAGVHFGHQTRRWNPKMAKYIFTERNGIHVIDLQQTVKYADQAYDFMRDAAANDAVVLFVGTKKQAADAVAEEAVRSGQYFINHRWLGGTLTNWGTIQKRIARLKEIKRMEEDGTFEVLPKKEVALLNKQRTRLEKFLGGIEDMPRIPDVMYVVDPHKEQIAVKEAKKLGIPVVAMVDTNTDPDDIDVIIPANDDAIRAVKLITAKLADAIIEGRQGEDAVAVEAEFAASETQADSIEEIVEVVEGDNA.

This sequence belongs to the universal ribosomal protein uS2 family.

This is Small ribosomal subunit protein uS2 from Streptococcus pneumoniae (strain CGSP14).